Consider the following 199-residue polypeptide: Holliday junction branch migration complex subunit RuvA (199 aa).

Residues 1–63 are domain I; it reads MIAYIEGKLA…EDAHTLFGFA (63 aa). The interval 64–142 is domain II; the sequence is DLMEKEMFLH…KDALLAGSDS (79 aa). Positions 143-151 are flexible linker; that stretch reads KQNFSVSHN. The tract at residues 151 to 199 is domain III; it reads NSIRSEALTALITLGFTKTVAEKNLDLILKGNSNSFTLEDLIKQALKMS.

The protein belongs to the RuvA family. In terms of assembly, homotetramer. Forms an RuvA(8)-RuvB(12)-Holliday junction (HJ) complex. HJ DNA is sandwiched between 2 RuvA tetramers; dsDNA enters through RuvA and exits via RuvB. An RuvB hexamer assembles on each DNA strand where it exits the tetramer. Each RuvB hexamer is contacted by two RuvA subunits (via domain III) on 2 adjacent RuvB subunits; this complex drives branch migration. In the full resolvosome a probable DNA-RuvA(4)-RuvB(12)-RuvC(2) complex forms which resolves the HJ.

It localises to the cytoplasm. In terms of biological role, the RuvA-RuvB-RuvC complex processes Holliday junction (HJ) DNA during genetic recombination and DNA repair, while the RuvA-RuvB complex plays an important role in the rescue of blocked DNA replication forks via replication fork reversal (RFR). RuvA specifically binds to HJ cruciform DNA, conferring on it an open structure. The RuvB hexamer acts as an ATP-dependent pump, pulling dsDNA into and through the RuvAB complex. HJ branch migration allows RuvC to scan DNA until it finds its consensus sequence, where it cleaves and resolves the cruciform DNA. This Cytophaga hutchinsonii (strain ATCC 33406 / DSM 1761 / CIP 103989 / NBRC 15051 / NCIMB 9469 / D465) protein is Holliday junction branch migration complex subunit RuvA.